Here is a 672-residue protein sequence, read N- to C-terminus: uncharacterized protein (672 aa).

A compositionally biased stretch (basic and acidic residues) spans 1–10 (MAKSDGDDPL). The interval 1–41 (MAKSDGDDPLRPASPRLRSSRRHSLRYSAYTGGPDPLAPPV) is disordered.

This is an uncharacterized protein from Mycobacterium bovis (strain ATCC BAA-935 / AF2122/97).